The primary structure comprises 234 residues: 2-C-methyl-D-erythritol 4-phosphate cytidylyltransferase (234 aa).

It belongs to the IspD/TarI cytidylyltransferase family. IspD subfamily.

It catalyses the reaction 2-C-methyl-D-erythritol 4-phosphate + CTP + H(+) = 4-CDP-2-C-methyl-D-erythritol + diphosphate. Its pathway is isoprenoid biosynthesis; isopentenyl diphosphate biosynthesis via DXP pathway; isopentenyl diphosphate from 1-deoxy-D-xylulose 5-phosphate: step 2/6. Catalyzes the formation of 4-diphosphocytidyl-2-C-methyl-D-erythritol from CTP and 2-C-methyl-D-erythritol 4-phosphate (MEP). The chain is 2-C-methyl-D-erythritol 4-phosphate cytidylyltransferase from Pseudomonas aeruginosa (strain ATCC 15692 / DSM 22644 / CIP 104116 / JCM 14847 / LMG 12228 / 1C / PRS 101 / PAO1).